The sequence spans 135 residues: Small ribosomal subunit protein bS16 (135 aa).

It belongs to the bacterial ribosomal protein bS16 family.

This chain is Small ribosomal subunit protein bS16, found in Prosthecochloris aestuarii (strain DSM 271 / SK 413).